The chain runs to 436 residues: Anaerobic glycerol-3-phosphate dehydrogenase subunit B (436 aa).

The protein belongs to the anaerobic G-3-P dehydrogenase subunit B family. As to quaternary structure, composed of a catalytic GlpA/B dimer and of membrane bound GlpC. FMN serves as cofactor.

The catalysed reaction is a quinone + sn-glycerol 3-phosphate = dihydroxyacetone phosphate + a quinol. Its pathway is polyol metabolism; glycerol degradation via glycerol kinase pathway; glycerone phosphate from sn-glycerol 3-phosphate (anaerobic route): step 1/1. In terms of biological role, conversion of glycerol 3-phosphate to dihydroxyacetone. Uses fumarate or nitrate as electron acceptor. The protein is Anaerobic glycerol-3-phosphate dehydrogenase subunit B of Vibrio cholerae serotype O1 (strain ATCC 39541 / Classical Ogawa 395 / O395).